Reading from the N-terminus, the 397-residue chain is Tryptophan synthase beta chain (397 aa).

An N6-(pyridoxal phosphate)lysine modification is found at Lys-86.

Belongs to the TrpB family. Tetramer of two alpha and two beta chains. Pyridoxal 5'-phosphate serves as cofactor.

The catalysed reaction is (1S,2R)-1-C-(indol-3-yl)glycerol 3-phosphate + L-serine = D-glyceraldehyde 3-phosphate + L-tryptophan + H2O. It functions in the pathway amino-acid biosynthesis; L-tryptophan biosynthesis; L-tryptophan from chorismate: step 5/5. Its function is as follows. The beta subunit is responsible for the synthesis of L-tryptophan from indole and L-serine. This Tolumonas auensis (strain DSM 9187 / NBRC 110442 / TA 4) protein is Tryptophan synthase beta chain.